The sequence spans 264 residues: S-adenosylmethionine decarboxylase proenzyme (264 aa).

The Schiff-base intermediate with substrate; via pyruvic acid role is filled by Ser-112. Position 112 is a pyruvic acid (Ser); by autocatalysis (Ser-112). Residue His-117 is the Proton acceptor; for processing activity of the active site. Cys-140 (proton donor; for catalytic activity) is an active-site residue.

This sequence belongs to the prokaryotic AdoMetDC family. Type 2 subfamily. In terms of assembly, heterooctamer of four alpha and four beta chains arranged as a tetramer of alpha/beta heterodimers. The cofactor is pyruvate. Post-translationally, is synthesized initially as an inactive proenzyme. Formation of the active enzyme involves a self-maturation process in which the active site pyruvoyl group is generated from an internal serine residue via an autocatalytic post-translational modification. Two non-identical subunits are generated from the proenzyme in this reaction, and the pyruvate is formed at the N-terminus of the alpha chain, which is derived from the carboxyl end of the proenzyme. The post-translation cleavage follows an unusual pathway, termed non-hydrolytic serinolysis, in which the side chain hydroxyl group of the serine supplies its oxygen atom to form the C-terminus of the beta chain, while the remainder of the serine residue undergoes an oxidative deamination to produce ammonia and the pyruvoyl group blocking the N-terminus of the alpha chain.

The catalysed reaction is S-adenosyl-L-methionine + H(+) = S-adenosyl 3-(methylsulfanyl)propylamine + CO2. It functions in the pathway amine and polyamine biosynthesis; S-adenosylmethioninamine biosynthesis; S-adenosylmethioninamine from S-adenosyl-L-methionine: step 1/1. Its function is as follows. Catalyzes the decarboxylation of S-adenosylmethionine to S-adenosylmethioninamine (dcAdoMet), the propylamine donor required for the synthesis of the polyamines spermine and spermidine from the diamine putrescine. In Salmonella choleraesuis (strain SC-B67), this protein is S-adenosylmethionine decarboxylase proenzyme.